We begin with the raw amino-acid sequence, 1456 residues long: MAKVREVYQSFTDSTTKTLIQDEAYRNIRPIMEKHKLSNPYAQTVEAANDLEGFGIATNPYSIELHTHAAAKTIENKLLEVLGSLLPQEPVTFMFLKPRKLNFMRRNPRIKDIFHNVAIEPRDVARYPKETIIHKLAEIKTDTAYISDTLHFLDPSYIVETFQNCPKLQTLYATLVLPVEAAFKMESTHPNIYSLKYFGDGFQYIPGNHGGGAYHHEFSHLQSVKVGKIKWRDPKDGLLGHLNYTHEQVDTHTVTVQLQESFAANHLYCIRRGNMMTPEVRTFGQPDRYVLPPQIFLPKVHNCKKPILKKTMMQLFLYVRTVKVAKNCDIFAKIRQLIKSSDLDKFSAVELVYLVSYMEFLAALQATTCFSDTLSGGLLTKTLAPVRAWIQEKKMQLCGLEDYAKLVKAVDWRPVDFSFKVETWDFRFNPLGMWKAFQPSELSDVEEMNNFFDDGDLLDCFTRMPAYAVNAEEDLAGMRGDNQGETSTAPREPEGDKKEYVNPAETFLDKLTRKHNRETKSRAAKKAKRLAEIQDSINRDQTEEESQGAPNMGEAPSNAELPGTNGAGAGTTFPTLKALPQKWEDASFTDSSMTDQMEIMPGKEAVEVATQKVVDELPWKHWLPQLNAVGFKALEIQRDRNGTMIMPITEMVFELDKEEFPEGTPEALARELKAMNRSPTTIPLDLLRARDYGSDVKNKRIGAITKTQAASWGEYLTGKIESLPERKVAACVIHGAGGSGKSHAIQKALREIGKGSDITVVLPTNELRLDWSKKVPNTEPYMFKTYEKALIGGTGSIVIFDDYSKLPPGYIEALVSFSTKIKLIILTGDSRQSVYHETSDDASIRHLGPATEVFAKYCRYYLNATHRNKKDLANMLGVYSERTGTTEISMSSEFLEGVPTLVPSDEKRKLYMGTGRNDTFTYAGCQGLTKPKVQIVLDHNTQVCSANVMYTALSRATDRIHFINTSANSSAFWEKLDSTPYLKTFLSVVREQALREYEPVEAEPIREPEPQTHMCVENEESVLEEYKEELLEKFDREIHSEAHGHSNCVQTEDTTVQLFSHQQAKDETLLWATIDARLKTSNQESNFREFLSKRDIGDVLFLNYQRAMGLPKEPIPFSQEVWEACAHEVQSKYLSKSKCNLINGTVRQSPDFDENKIMVFLKSQWVTKVEKLGLPKIKPGQTIAAFYQQTVMLFGTMARYMRWFRQAFQPKEVFINCETTPEDMSAWALSNWNFTRPSLANDYTAFDQSQDGAMLQFEVLKAKHHCIPEEIIQAYIDIKTNAQIFLGTLSIMRLTGEGPTFDANTECNIAFTHTKFDIPAGTAQVYAGDDSALDCVPEIKQSFHRLEDKLLLKSKPVITQQKKGSWPEFCGWLITPKGVMKDPIKLHVSLKLAEAKGELKKCQDSYEIDLSYAYDHKDSLHDLFDEKQCQAHTLTCRTLIKSGRGTVSLPRLRNFL.

The region spanning 59 to 225 (NPYSIELHTH…HEFSHLQSVK (167 aa)) is the Alphavirus-like MT domain. Disordered stretches follow at residues 474-500 (DLAGMRGDNQGETSTAPREPEGDKKEY) and 512-571 (TRKH…GAGT). Basic and acidic residues predominate over residues 491–500 (REPEGDKKEY). A compositionally biased stretch (basic residues) spans 512–528 (TRKHNRETKSRAAKKAK). Residues 529-541 (RLAEIQDSINRDQ) are compositionally biased toward basic and acidic residues. The (+)RNA virus helicase ATP-binding domain occupies 695 to 862 (DVKNKRIGAI…VFAKYCRYYL (168 aa)). 735–742 (GAGGSGKS) provides a ligand contact to ATP. Residues 863–997 (NATHRNKKDL…VVREQALREY (135 aa)) enclose the (+)RNA virus helicase C-terminal domain. In terms of domain architecture, RdRp catalytic spans 1236 to 1343 (RPSLANDYTA…DCVPEIKQSF (108 aa)).

It belongs to the potexvirus/carlavirus RNA replication protein family.

The enzyme catalyses RNA(n) + a ribonucleoside 5'-triphosphate = RNA(n+1) + diphosphate. It catalyses the reaction ATP + H2O = ADP + phosphate + H(+). In terms of biological role, RNA replication. The central part of this protein possibly functions as an ATP-binding helicase. This is RNA replication protein from Potato virus X (strain HB) (PVX).